The sequence spans 334 residues: N-chimaerin (334 aa).

The span at methionine 1–arginine 10 shows a compositional bias: polar residues. Residues methionine 1–glutamine 22 are disordered. Threonine 67 is subject to Phosphothreonine. Residues valine 80–cysteine 130 form a Phorbol-ester/DAG-type zinc finger. In terms of domain architecture, Rho-GAP spans cysteine 143–phenylalanine 334. Phosphothreonine is present on threonine 215.

As to quaternary structure, interacts with EPHA4; effector of EPHA4 in axon guidance linking EPHA4 activation to RAC1 regulation. Phosphorylated. Phosphorylation is EPHA4 kinase activity-dependent. In terms of tissue distribution, in neurons in brain regions that are involved in learning and memory processes.

In terms of biological role, GTPase-activating protein for p21-rac and a phorbol ester receptor. Involved in the assembly of neuronal locomotor circuits as a direct effector of EPHA4 in axon guidance. In Rattus norvegicus (Rat), this protein is N-chimaerin (Chn1).